The following is a 367-amino-acid chain: Aminomethyltransferase (367 aa).

Belongs to the GcvT family. The glycine cleavage system is composed of four proteins: P, T, L and H.

The enzyme catalyses N(6)-[(R)-S(8)-aminomethyldihydrolipoyl]-L-lysyl-[protein] + (6S)-5,6,7,8-tetrahydrofolate = N(6)-[(R)-dihydrolipoyl]-L-lysyl-[protein] + (6R)-5,10-methylene-5,6,7,8-tetrahydrofolate + NH4(+). The glycine cleavage system catalyzes the degradation of glycine. This chain is Aminomethyltransferase, found in Parasynechococcus marenigrum (strain WH8102).